Reading from the N-terminus, the 197-residue chain is uncharacterized protein (197 aa).

4 helical membrane-spanning segments follow: residues 11-31, 85-105, 109-129, and 174-194; these read IALI…ISAS, STFM…SIFV, AVVV…VVLF, and VGTG…YPFI.

It localises to the cell membrane. This is an uncharacterized protein from Methanocaldococcus jannaschii (strain ATCC 43067 / DSM 2661 / JAL-1 / JCM 10045 / NBRC 100440) (Methanococcus jannaschii).